The chain runs to 609 residues: RAS guanyl-releasing protein 2 (609 aa).

A lipid anchor (N-myristoyl glycine) is attached at Ala2. The region spanning Thr4–Thr126 is the N-terminal Ras-GEF domain. Leu7 carries S-palmitoyl cysteine lipidation. Phosphoserine occurs at positions 116, 117, and 147. A Ras-GEF domain is found at Glu154–Arg387. The tract at residues Leu382 to Val406 is disordered. 2 EF-hand domains span residues His426–Leu461 and Arg455–Val490. Ca(2+) is bound by residues Asp439, Asp441, Asp443, His445, Glu450, Asp468, Asn470, Asp472, Cys474, and Glu479. The Phorbol-ester/DAG-type zinc-finger motif lies at Val498 to Cys548. Phosphoserine is present on residues Ser554 and Ser576. The tract at residues Leu557–Ile592 is disordered.

Belongs to the RASGRP family. As to quaternary structure, forms a signaling complex with RAP1 and BRAF. Interacts with RAP1. Interacts with F-actin. Post-translationally, isoform 2 is palmitoylated and myristoylated. In terms of tissue distribution, detected in platelets, neutrophils and T lymphocytes (at protein level). Expressed in brain where it is enriched in the striatum. Also expressed in the hematopoietic system. Detected in heart, brain, lung, placenta, liver, skeletal muscle and kidney.

The protein localises to the cytoplasm. It is found in the cytosol. It localises to the cell membrane. The protein resides in the synapse. Its subcellular location is the synaptosome. The protein localises to the cell projection. It is found in the ruffle membrane. Its activity is regulated as follows. Isoform 1 and isoform 2 are differently regulated by calcium and DAG. In terms of biological role, functions as a calcium- and DAG-regulated nucleotide exchange factor specifically activating Rap through the exchange of bound GDP for GTP. May also activate other GTPases such as RRAS, RRAS2, NRAS, KRAS but not HRAS. Functions in aggregation of platelets and adhesion of T-lymphocytes and neutrophils probably through inside-out integrin activation. May function in the muscarinic acetylcholine receptor M1/CHRM1 signaling pathway. The protein is RAS guanyl-releasing protein 2 (RASGRP2) of Homo sapiens (Human).